The chain runs to 315 residues: Ester hydrolase C11orf54 homolog (315 aa).

Residues His-266, His-268, and His-278 each coordinate Zn(2+).

In terms of assembly, monomer.

The protein resides in the nucleus. In terms of biological role, exhibits ester hydrolase activity on the substrate p-nitrophenyl acetate. The protein is Ester hydrolase C11orf54 homolog of Bos taurus (Bovine).